The chain runs to 515 residues: AAA ATPase forming ring-shaped complexes (515 aa).

The stretch at 2 to 49 (NDHDEETLASLQQANDQLMAKNHALVKALSRATQEMTKTKAQLNQLAG) forms a coiled coil. 240–245 (GNGKTL) contacts ATP.

Belongs to the AAA ATPase family. In terms of assembly, homohexamer. Assembles into a hexameric ring structure.

In Bifidobacterium adolescentis (strain ATCC 15703 / DSM 20083 / NCTC 11814 / E194a), this protein is AAA ATPase forming ring-shaped complexes.